The sequence spans 418 residues: 3-phosphoshikimate 1-carboxyvinyltransferase (418 aa).

Lysine 26, serine 27, and arginine 31 together coordinate 3-phosphoshikimate. A phosphoenolpyruvate-binding site is contributed by lysine 26. 2 residues coordinate phosphoenolpyruvate: glycine 97 and arginine 125. 3-phosphoshikimate contacts are provided by serine 170, serine 171, glutamine 172, aspartate 297, asparagine 320, and lysine 324. Glutamine 172 contacts phosphoenolpyruvate. Aspartate 297 serves as the catalytic Proton acceptor. Residues arginine 328, arginine 375, and lysine 400 each coordinate phosphoenolpyruvate.

The protein belongs to the EPSP synthase family. As to quaternary structure, monomer.

The protein localises to the cytoplasm. The catalysed reaction is 3-phosphoshikimate + phosphoenolpyruvate = 5-O-(1-carboxyvinyl)-3-phosphoshikimate + phosphate. It functions in the pathway metabolic intermediate biosynthesis; chorismate biosynthesis; chorismate from D-erythrose 4-phosphate and phosphoenolpyruvate: step 6/7. Catalyzes the transfer of the enolpyruvyl moiety of phosphoenolpyruvate (PEP) to the 5-hydroxyl of shikimate-3-phosphate (S3P) to produce enolpyruvyl shikimate-3-phosphate and inorganic phosphate. This chain is 3-phosphoshikimate 1-carboxyvinyltransferase, found in Pseudomonas savastanoi pv. phaseolicola (strain 1448A / Race 6) (Pseudomonas syringae pv. phaseolicola (strain 1448A / Race 6)).